Consider the following 456-residue polypeptide: UDP-N-acetylmuramoylalanine--D-glutamate ligase (456 aa).

An ATP-binding site is contributed by glycine 119 to threonine 125.

This sequence belongs to the MurCDEF family.

The protein resides in the cytoplasm. The enzyme catalyses UDP-N-acetyl-alpha-D-muramoyl-L-alanine + D-glutamate + ATP = UDP-N-acetyl-alpha-D-muramoyl-L-alanyl-D-glutamate + ADP + phosphate + H(+). The protein operates within cell wall biogenesis; peptidoglycan biosynthesis. In terms of biological role, cell wall formation. Catalyzes the addition of glutamate to the nucleotide precursor UDP-N-acetylmuramoyl-L-alanine (UMA). This Enterococcus faecalis (strain ATCC 700802 / V583) protein is UDP-N-acetylmuramoylalanine--D-glutamate ligase (murD).